Consider the following 244-residue polypeptide: Cysteine-rich secretory protein 2 (244 aa).

Positions 1–21 are cleaved as a signal peptide; it reads MALLPVVVFLITMLLPCVLTN. Residues 43–170 form the SCP domain; it reads NKHNQLRKSV…SLKYYYVCQY (128 aa). Cystine bridges form between cysteine 190–cysteine 197, cysteine 193–cysteine 202, cysteine 206–cysteine 239, cysteine 215–cysteine 233, and cysteine 224–cysteine 237. The ShKT domain maps to 206-239; sequence CEYEDLLSNCESLKNTAGCEHQLLVEKCKATCRC.

Belongs to the CRISP family. Interacts with NSUN4 isoform 3. In terms of tissue distribution, testis.

It is found in the secreted. May regulate some ion channels' activity and thereby regulate calcium fluxes during sperm capacitation. The protein is Cysteine-rich secretory protein 2 (CRISP2) of Cavia porcellus (Guinea pig).